The sequence spans 620 residues: Proline--tRNA ligase (620 aa).

Belongs to the class-II aminoacyl-tRNA synthetase family. ProS type 1 subfamily. As to quaternary structure, homodimer.

The protein resides in the cytoplasm. It carries out the reaction tRNA(Pro) + L-proline + ATP = L-prolyl-tRNA(Pro) + AMP + diphosphate. Catalyzes the attachment of proline to tRNA(Pro) in a two-step reaction: proline is first activated by ATP to form Pro-AMP and then transferred to the acceptor end of tRNA(Pro). As ProRS can inadvertently accommodate and process non-cognate amino acids such as alanine and cysteine, to avoid such errors it has two additional distinct editing activities against alanine. One activity is designated as 'pretransfer' editing and involves the tRNA(Pro)-independent hydrolysis of activated Ala-AMP. The other activity is designated 'posttransfer' editing and involves deacylation of mischarged Ala-tRNA(Pro). The misacylated Cys-tRNA(Pro) is not edited by ProRS. The protein is Proline--tRNA ligase of Streptococcus thermophilus (strain CNRZ 1066).